A 393-amino-acid chain; its full sequence is Protein FAM53C (393 aa).

M1 carries the N-acetylmethionine modification. A disordered region spans residues 77–120 (HLRPPSRGNSPKEPPLSQVLSPEPPDPEKLPVPPAPPSKRHCRS). Residues S122 and S162 each carry the phosphoserine modification. Disordered regions lie at residues 141-167 (LWTPIKHRGNAGGGGPQVPQQSPPKRV) and 204-283 (QPCA…ARKT). Over residues 204-215 (QPCATSPQSGSW) the composition is skewed to polar residues. S232, S234, S255, S273, and S299 each carry phosphoserine. A compositionally biased stretch (low complexity) spans 241-256 (ASRFLPSARSSPASSP). Positions 343 to 355 (SCSPVEGSSQVLS) are enriched in low complexity. The segment at 343–365 (SCSPVEGSSQVLSESEEEEEGSV) is disordered.

Belongs to the FAM53 family.

In Mus musculus (Mouse), this protein is Protein FAM53C.